A 442-amino-acid polypeptide reads, in one-letter code: tRNA modification GTPase MnmE (442 aa).

Positions 22, 79, and 119 each coordinate (6S)-5-formyl-5,6,7,8-tetrahydrofolate. Positions 216–366 constitute a TrmE-type G domain; sequence GIKTCLVGAP…LLEKIKSIFA (151 aa). Asn-226 contributes to the K(+) binding site. Residues 226-231, 245-251, and 270-273 each bind GTP; these read NSGKSS, SEIPGTT, and DTAG. Ser-230 is a Mg(2+) binding site. Ser-245, Ile-247, and Thr-250 together coordinate K(+). Thr-251 lines the Mg(2+) pocket. Lys-442 serves as a coordination point for (6S)-5-formyl-5,6,7,8-tetrahydrofolate.

This sequence belongs to the TRAFAC class TrmE-Era-EngA-EngB-Septin-like GTPase superfamily. TrmE GTPase family. As to quaternary structure, homodimer. Heterotetramer of two MnmE and two MnmG subunits. K(+) is required as a cofactor.

Its subcellular location is the cytoplasm. In terms of biological role, exhibits a very high intrinsic GTPase hydrolysis rate. Involved in the addition of a carboxymethylaminomethyl (cmnm) group at the wobble position (U34) of certain tRNAs, forming tRNA-cmnm(5)s(2)U34. This chain is tRNA modification GTPase MnmE, found in Mesomycoplasma hyopneumoniae (strain J / ATCC 25934 / NCTC 10110) (Mycoplasma hyopneumoniae).